The primary structure comprises 358 residues: Putative zinc metalloprotease RC0203 (358 aa).

His-18 provides a ligand contact to Zn(2+). Glu-19 is an active-site residue. A Zn(2+)-binding site is contributed by His-22. Helical transmembrane passes span 52 to 71, 97 to 119, 285 to 307, and 332 to 351; these read GVRWKICLIPLGGYVKIYGY, FLIVAAGPLINYLLAIIIFAGFY, YLLFIAMLSVNLGLLNLLPIPVL, and ILLQLGAIIIIFLIIIAVSN. Residues 102-186 form the PDZ domain; sequence AGPLINYLLA…STLTIERKSE (85 aa).

It belongs to the peptidase M50B family. It depends on Zn(2+) as a cofactor.

The protein resides in the cell inner membrane. This is Putative zinc metalloprotease RC0203 from Rickettsia conorii (strain ATCC VR-613 / Malish 7).